The sequence spans 783 residues: Protein phosphatase 2C 29 (783 aa).

Residues 151–194 (SFSALPLQPGPDRSGLFMSGPIERGATSGPLDPPAGEISRSNSA) form a disordered region. S199 carries the post-translational modification Phosphoserine. One can recognise a PPM-type phosphatase domain in the interval 260–770 (SSGENDLQWA…DDCTVLVIAL (511 aa)). 2 residues coordinate Mn(2+): D295 and G296. Residues 555–595 (ETGESVETAERVEERRNDLDRDDGNKEPLVVDSSDSTVNNE) are disordered. Basic and acidic residues predominate over residues 562-580 (TAERVEERRNDLDRDDGNK). Mn(2+) contacts are provided by D701 and D761.

It belongs to the PP2C family. Mg(2+) is required as a cofactor. It depends on Mn(2+) as a cofactor. As to expression, expressed in roots, leaves, stems, inflorescences, flowers and developing vascular tissue.

Its subcellular location is the nucleus. It carries out the reaction O-phospho-L-seryl-[protein] + H2O = L-seryl-[protein] + phosphate. The enzyme catalyses O-phospho-L-threonyl-[protein] + H2O = L-threonyl-[protein] + phosphate. Functionally, involved in the regulation of pedicel length and of CLAVATA pathways controlling stem cell identity at shoot and flower meristems. The protein is Protein phosphatase 2C 29 (PLL1) of Arabidopsis thaliana (Mouse-ear cress).